Consider the following 271-residue polypeptide: Probable esterase D14L (271 aa).

Catalysis depends on S96, which acts as the Nucleophile. Residues D218 and H247 contribute to the active site.

This sequence belongs to the AB hydrolase superfamily. In terms of assembly, component of an intracellular receptor complex involved in the detection of the smoke compound karrikin. Expressed constitutively in all organs (e.g. roots, stems, leaves, panicles and embryos).

It is found in the nucleus. The protein localises to the cytoplasm. In terms of biological role, may be involved in strigolactone signaling pathway. Essential for plant responses to karrikins, a class of butenolide compounds, structurally similar to strigolactones, released from burning vegetation that stimulate seed germination and enhance seedling photomorphogenesis. Mediates a specific perception of karrikin. Required for the establishment of symbiosis with the arbuscular mycorrhizal fungi (AMF) Rhizophagus irregularis and Gigaspora rosea. Karrikin binding induces a conformational change. The sequence is that of Probable esterase D14L (D14L) from Oryza sativa subsp. japonica (Rice).